We begin with the raw amino-acid sequence, 355 residues long: Protein RecA (355 aa).

72-79 (GPESSGKT) is a binding site for ATP.

This sequence belongs to the RecA family.

The protein resides in the cytoplasm. Functionally, can catalyze the hydrolysis of ATP in the presence of single-stranded DNA, the ATP-dependent uptake of single-stranded DNA by duplex DNA, and the ATP-dependent hybridization of homologous single-stranded DNAs. It interacts with LexA causing its activation and leading to its autocatalytic cleavage. The protein is Protein RecA of Wolbachia sp. subsp. Brugia malayi (strain TRS).